Reading from the N-terminus, the 274-residue chain is MAIHLYKTSTPSTRNGAVDSQVKSNTRNNLIYGQHRCSKGRNARGIITARHRGGGHKRLYRKIDFRRNEKYIYGRIVTIEYDPNRNAYICLIHYGDGEKRYILHPRGAIIGDTIISGTEVPIKMGNALPLTDMPLGTAIHNIEITLGRGGQLARAAGAVAKLIAKEGKSATLKLPSGEVRLISKNCSATVGQVGNAGVNQKSLGRAGSKCWLGKRPVVRGVVMNPVDHPHGGGEGRAPIGRKKPATPWGYPALGRRSRKRNKYSDNLILRRRSK.

Disordered regions lie at residues methionine 1–serine 20 and asparagine 224–lysine 274.

It belongs to the universal ribosomal protein uL2 family. In terms of assembly, part of the 50S ribosomal subunit.

The protein resides in the plastid. It is found in the chloroplast. The chain is Large ribosomal subunit protein uL2cy (rpl2-B) from Populus alba (White poplar).